A 341-amino-acid chain; its full sequence is Phosphate acyltransferase (341 aa).

Belongs to the PlsX family. As to quaternary structure, homodimer. Probably interacts with PlsY.

Its subcellular location is the cytoplasm. It catalyses the reaction a fatty acyl-[ACP] + phosphate = an acyl phosphate + holo-[ACP]. It participates in lipid metabolism; phospholipid metabolism. Its function is as follows. Catalyzes the reversible formation of acyl-phosphate (acyl-PO(4)) from acyl-[acyl-carrier-protein] (acyl-ACP). This enzyme utilizes acyl-ACP as fatty acyl donor, but not acyl-CoA. This Saccharophagus degradans (strain 2-40 / ATCC 43961 / DSM 17024) protein is Phosphate acyltransferase.